The sequence spans 151 residues: 6,7-dimethyl-8-ribityllumazine synthase (151 aa).

Residues Phe23, 55–57, and 79–81 each bind 5-amino-6-(D-ribitylamino)uracil; these read AYE and AVI. 84–85 is a (2S)-2-hydroxy-3-oxobutyl phosphate binding site; it reads AT. His87 serves as the catalytic Proton donor. Residue Phe111 participates in 5-amino-6-(D-ribitylamino)uracil binding. A (2S)-2-hydroxy-3-oxobutyl phosphate-binding site is contributed by Arg125.

The protein belongs to the DMRL synthase family.

The enzyme catalyses (2S)-2-hydroxy-3-oxobutyl phosphate + 5-amino-6-(D-ribitylamino)uracil = 6,7-dimethyl-8-(1-D-ribityl)lumazine + phosphate + 2 H2O + H(+). The protein operates within cofactor biosynthesis; riboflavin biosynthesis; riboflavin from 2-hydroxy-3-oxobutyl phosphate and 5-amino-6-(D-ribitylamino)uracil: step 1/2. Catalyzes the formation of 6,7-dimethyl-8-ribityllumazine by condensation of 5-amino-6-(D-ribitylamino)uracil with 3,4-dihydroxy-2-butanone 4-phosphate. This is the penultimate step in the biosynthesis of riboflavin. This Leptospira interrogans serogroup Icterohaemorrhagiae serovar copenhageni (strain Fiocruz L1-130) protein is 6,7-dimethyl-8-ribityllumazine synthase.